A 205-amino-acid chain; its full sequence is Heme-binding protein 2 (205 aa).

The segment at 1–37 (MAEEPEPDLGVAEGSEDQALEMPSWKAPEDIDPQPGS) is disordered. A2 carries the post-translational modification N-acetylalanine. S181 is modified (phosphoserine).

It belongs to the HEBP family. In terms of assembly, monomer. Interacts with LRPPRC. May interact with BCL2L1; an interaction with BCL2L1 was observed using a peptide, but not with the full-length protein. The full-length protein would have to undergo a major conformation change for the interaction to occur. Interacts with PDCD6.

It is found in the cytoplasm. The protein localises to the mitochondrion. Its function is as follows. Can promote mitochondrial permeability transition and facilitate necrotic cell death under different types of stress conditions. May have low affinity for heme. This chain is Heme-binding protein 2 (Hebp2), found in Mus musculus (Mouse).